The chain runs to 122 residues: NADH-quinone oxidoreductase subunit A (122 aa).

3 helical membrane passes run 10 to 30 (MIVLIFLLLGILLPVVALTLG), 66 to 86 (IFALLFVIFDVETLFLYPWAV), and 91 to 111 (LGLFALIEMLIFVVMLLVGLA).

The protein belongs to the complex I subunit 3 family. In terms of assembly, NDH-1 is composed of 14 different subunits. Subunits NuoA, H, J, K, L, M, N constitute the membrane sector of the complex.

It is found in the cell membrane. It carries out the reaction a quinone + NADH + 5 H(+)(in) = a quinol + NAD(+) + 4 H(+)(out). Its function is as follows. NDH-1 shuttles electrons from NADH, via FMN and iron-sulfur (Fe-S) centers, to quinones in the respiratory chain. The immediate electron acceptor for the enzyme in this species is believed to be a menaquinone. Couples the redox reaction to proton translocation (for every two electrons transferred, four hydrogen ions are translocated across the cytoplasmic membrane), and thus conserves the redox energy in a proton gradient. This is NADH-quinone oxidoreductase subunit A from Bacillus cereus (strain ATCC 14579 / DSM 31 / CCUG 7414 / JCM 2152 / NBRC 15305 / NCIMB 9373 / NCTC 2599 / NRRL B-3711).